The following is a 214-amino-acid chain: Rac-like GTP-binding protein 1 (214 aa).

GTP contacts are provided by residues 17 to 24 (GDGAVGKT), 20 to 25 (AVGKTC), T42, 64 to 68 (DTAGQ), G67, 122 to 125 (TKLD), 123 to 125 (KLD), and 164 to 165 (SK). The Effector region motif lies at 39–47 (YIPTVFDNF).

The protein belongs to the small GTPase superfamily. Rho family. As to quaternary structure, may interact with MPK1/MAPK6. Binds to RBOHB, preferentially in the GTP-bound form. Interacts with CCR1 in a GTP-dependent manner. Post-translationally, may be palmitoylated.

It localises to the cytoplasm. The protein localises to the membrane. Its function is as follows. Small GTPase playing a general role in disease resistance signaling pathway. Acts downstream of heterotrimeric G protein alpha subunit. Regulates cell death and reactive oxygen species production, probably through NADPH oxidase. Also involved in sphingolipid elicitor (SE)-dependent defense signaling. Activates phytoalexin production and alters defense-related genes. Down-regulates metallothionein 2b, a reactive oxygen scavenger. May control lignin synthesis through regulation of both NADPH oxidase and CCR1 activities during defense responses. Stimulates lignin synthesis in suspension cell culture. This is Rac-like GTP-binding protein 1 (RAC1) from Oryza sativa subsp. japonica (Rice).